A 187-amino-acid chain; its full sequence is Transcriptional repressor NrdR (187 aa).

The interval 1-21 is disordered; sequence MQCPYCQHTNSRVLESRSSEG. A zinc finger lies at 3-34; that stretch reads CPYCQHTNSRVLESRSSEGGQSIRRRRECLNC. The ATP-cone domain occupies 49-139; sequence ITVIKHDGKK…VYGRFKGIKD (91 aa). Polar residues-rich tracts occupy residues 152–162 and 170–187; these read ISSPMSQWSKS and SQTS…ENSR. Residues 152–187 are disordered; that stretch reads ISSPMSQWSKSSTRDRDQSQTSPCLSLTHNGSENSR.

The protein belongs to the NrdR family. It depends on Zn(2+) as a cofactor.

Its function is as follows. Negatively regulates transcription of bacterial ribonucleotide reductase nrd genes and operons by binding to NrdR-boxes. In Crocosphaera subtropica (strain ATCC 51142 / BH68) (Cyanothece sp. (strain ATCC 51142)), this protein is Transcriptional repressor NrdR.